A 142-amino-acid polypeptide reads, in one-letter code: ETGRIHHGGNFQAMAVTNAMEKTRLALHHIGKIIFAQSTELINPATNRGLPPSLAASDPSLNYHVKGVDIATAAYAAELGYLASPVSTHIQSAEMHNQAVNSMALVSARATINSIDVLSMLVATYLYNLCQALDLRALQAEF.

(E)-cinnamate is bound by residues lysine 66, glutamate 94, and asparagine 97.

The protein belongs to the PAL/histidase family. As to quaternary structure, homotetramer. Post-translationally, contains an active site 4-methylidene-imidazol-5-one (MIO), which is formed autocatalytically by cyclization and dehydration of residues Ala-Ser-Gly.

The protein localises to the cytoplasm. It carries out the reaction L-phenylalanine = (E)-cinnamate + NH4(+). Its pathway is phenylpropanoid metabolism; trans-cinnamate biosynthesis; trans-cinnamate from L-phenylalanine: step 1/1. Its function is as follows. Catalyzes the non-oxidative deamination of L-phenylalanine to form trans-cinnamic acid and a free ammonium ion. Facilitates the commitment step in phenylpropanoid pathways that produce secondary metabolites such as lignins, coumarins and flavonoids. This is Phenylalanine ammonia-lyase (palA) from Agaricus bisporus (White button mushroom).